The following is a 490-amino-acid chain: Acetyl-coenzyme A carboxylase carboxyl transferase subunit beta, chloroplastic (490 aa).

Residues 184 to 203 (LNSSENEGSSRRTRTKGSDL) form a disordered region. In terms of domain architecture, CoA carboxyltransferase N-terminal spans 221–490 (LWVQCENCYG…PLNQKSSKIK (270 aa)). 4 residues coordinate Zn(2+): Cys225, Cys228, Cys244, and Cys247. The segment at 225–247 (CENCYGLNYKKFLKSKMNICEQC) adopts a C4-type zinc-finger fold.

This sequence belongs to the AccD/PCCB family. As to quaternary structure, acetyl-CoA carboxylase is a heterohexamer composed of biotin carboxyl carrier protein, biotin carboxylase and 2 subunits each of ACCase subunit alpha and ACCase plastid-coded subunit beta (accD). It depends on Zn(2+) as a cofactor.

It is found in the plastid. The protein resides in the chloroplast stroma. The catalysed reaction is N(6)-carboxybiotinyl-L-lysyl-[protein] + acetyl-CoA = N(6)-biotinyl-L-lysyl-[protein] + malonyl-CoA. It participates in lipid metabolism; malonyl-CoA biosynthesis; malonyl-CoA from acetyl-CoA: step 1/1. Component of the acetyl coenzyme A carboxylase (ACC) complex. Biotin carboxylase (BC) catalyzes the carboxylation of biotin on its carrier protein (BCCP) and then the CO(2) group is transferred by the transcarboxylase to acetyl-CoA to form malonyl-CoA. The sequence is that of Acetyl-coenzyme A carboxylase carboxyl transferase subunit beta, chloroplastic from Solanum bulbocastanum (Wild potato).